Reading from the N-terminus, the 459-residue chain is Ribulose bisphosphate carboxylase (459 aa).

Residue asparagine 111 coordinates substrate. Lysine 166 functions as the Proton acceptor in the catalytic mechanism. Lysine 168 is a binding site for substrate. 3 residues coordinate Mg(2+): lysine 191, aspartate 193, and glutamate 194. Position 191 is an N6-carboxylysine (lysine 191). Catalysis depends on histidine 287, which acts as the Proton acceptor. Positions 288, 321, and 368 each coordinate substrate.

It belongs to the RuBisCO large chain family. Type II subfamily. In terms of assembly, homodimer. Mg(2+) serves as cofactor.

It carries out the reaction 2 (2R)-3-phosphoglycerate + 2 H(+) = D-ribulose 1,5-bisphosphate + CO2 + H2O. It catalyses the reaction D-ribulose 1,5-bisphosphate + O2 = 2-phosphoglycolate + (2R)-3-phosphoglycerate + 2 H(+). Its function is as follows. RuBisCO catalyzes two reactions: the carboxylation of D-ribulose 1,5-bisphosphate, the primary event in carbon dioxide fixation, as well as the oxidative fragmentation of the pentose substrate. Both reactions occur simultaneously and in competition at the same active site. The chain is Ribulose bisphosphate carboxylase from Cereibacter sphaeroides (Rhodobacter sphaeroides).